Consider the following 173-residue polypeptide: Protein tyrosine phosphatase type IVA 3 (173 aa).

Positions 8–161 (APVEVSYKNM…YRPKQRLRFK (154 aa)) constitute a Tyrosine-protein phosphatase domain. A disulfide bridge links C49 with C104. Catalysis depends on D72, which acts as the Proton donor. The active-site Phosphocysteine intermediate is the C104. R110 provides a ligand contact to substrate. Residue C170 is modified to Cysteine methyl ester. The S-farnesyl cysteine moiety is linked to residue C170. A propeptide spans 171-173 (CIM) (removed in mature form).

This sequence belongs to the protein-tyrosine phosphatase family. As to quaternary structure, interacts with tubulin. Post-translationally, farnesylated. Farnesylation is required for membrane targeting. Unfarnesylated forms are shifted into the nucleus.

The protein localises to the cell membrane. It localises to the early endosome. The catalysed reaction is O-phospho-L-tyrosyl-[protein] + H2O = L-tyrosyl-[protein] + phosphate. With respect to regulation, inhibited by sodium orthovanadate and peroxovanadium compounds, and by pentamidine. Protein tyrosine phosphatase which stimulates progression from G1 into S phase during mitosis. Enhances cell proliferation, cell motility and invasive activity, and promotes cancer metastasis. May be involved in the progression of cardiac hypertrophy by inhibiting intracellular calcium mobilization in response to angiotensin II. The polypeptide is Protein tyrosine phosphatase type IVA 3 (PTP4A3) (Bos taurus (Bovine)).